A 496-amino-acid chain; its full sequence is Serine/threonine-protein kinase Sgk3 (496 aa).

In terms of domain architecture, PX spans 12 to 124; sequence SCPSVSIPSS…AFLQMDSPRH (113 aa). Positions 121-157 are disordered; it reads SPRHQSDPSEDEDERSTPKPHSTSRNINLGPTGNPHA. Phosphoserine is present on residues Ser-126 and Ser-129. Over residues 139–151 the composition is skewed to polar residues; sequence KPHSTSRNINLGP. A Protein kinase domain is found at 162–464; sequence FDFLKVIGKG…EETVPYSVCV (303 aa). ATP contacts are provided by residues 168–176 and Lys-191; that span reads IGKGSFGKV. The short motif at 195-205 is the Nuclear localization signal element; the sequence is KKIVLNRKEQK. Asp-286 serves as the catalytic Proton acceptor. At Thr-320 the chain carries Phosphothreonine; by PDPK1. Residues 420-496 form the AGC-kinase C-terminal domain; that stretch reads ESLSWTDLVQ…YAPPSEDLFL (77 aa). Residue Ser-486 is modified to Phosphoserine.

Belongs to the protein kinase superfamily. AGC Ser/Thr protein kinase family. As to quaternary structure, interacts with GSK3B and FLII. Interacts with PDPK1 in a phosphorylation-dependent manner. Activated by phosphorylation on Ser-486 by an unknown kinase (may be mTORC2 but not confirmed), transforming it into a substrate for PDPK1 which then phosphorylates it on Thr-320.

The protein resides in the cytoplasmic vesicle. It is found in the early endosome. Its subcellular location is the recycling endosome. It carries out the reaction L-seryl-[protein] + ATP = O-phospho-L-seryl-[protein] + ADP + H(+). The enzyme catalyses L-threonyl-[protein] + ATP = O-phospho-L-threonyl-[protein] + ADP + H(+). Two specific sites, one in the kinase domain (Thr-320) and the other in the C-terminal regulatory region (Ser-486), need to be phosphorylated for its full activation. Serine/threonine-protein kinase which is involved in the regulation of a wide variety of ion channels, membrane transporters, cell growth, proliferation, survival and migration. Up-regulates Na(+) channels: SCNN1A/ENAC and SCN5A, K(+) channels: KCNA3/KV1.3, KCNE1, KCNQ1 and KCNH2/HERG, epithelial Ca(2+) channels: TRPV5 and TRPV6, chloride channel: BSND, creatine transporter: SLC6A8, Na(+)/dicarboxylate cotransporter: SLC13A2/NADC1, Na(+)-dependent phosphate cotransporter: SLC34A2/NAPI-2B, amino acid transporters: SLC1A5/ASCT2 and SLC6A19, glutamate transporters: SLC1A3/EAAT1, SLC1A6/EAAT4 and SLC1A7/EAAT5, glutamate receptors: GRIA1/GLUR1 and GRIK2/GLUR6, Na(+)/H(+) exchanger: SLC9A3/NHE3, and the Na(+)/K(+) ATPase. Plays a role in the regulation of renal tubular phosphate transport and bone density. Phosphorylates NEDD4L and GSK3B. Positively regulates ER transcription activity through phosphorylation of FLII. Negatively regulates the function of ITCH/AIP4 via its phosphorylation and thereby prevents CXCR4 from being efficiently sorted to lysosomes. In Rattus norvegicus (Rat), this protein is Serine/threonine-protein kinase Sgk3 (Sgk3).